A 105-amino-acid chain; its full sequence is Large ribosomal subunit protein uL24 (105 aa).

Belongs to the universal ribosomal protein uL24 family. As to quaternary structure, part of the 50S ribosomal subunit.

One of two assembly initiator proteins, it binds directly to the 5'-end of the 23S rRNA, where it nucleates assembly of the 50S subunit. Its function is as follows. One of the proteins that surrounds the polypeptide exit tunnel on the outside of the subunit. In Anaplasma marginale (strain St. Maries), this protein is Large ribosomal subunit protein uL24.